Here is a 430-residue protein sequence, read N- to C-terminus: Adenylosuccinate synthetase (430 aa).

Residues 12-18 (GDEGKGK) and 40-42 (GHT) contribute to the GTP site. The active-site Proton acceptor is aspartate 13. Aspartate 13 and glycine 40 together coordinate Mg(2+). Residues 13 to 16 (DEGK), 38 to 41 (NAGH), threonine 130, arginine 144, glutamine 224, threonine 239, and arginine 303 each bind IMP. Residue histidine 41 is the Proton donor of the active site. A substrate-binding site is contributed by 299-305 (VVTGRKR). Residues arginine 305, 331 to 333 (KLD), and 413 to 415 (STS) each bind GTP.

Belongs to the adenylosuccinate synthetase family. Homodimer. Mg(2+) is required as a cofactor.

It localises to the cytoplasm. It catalyses the reaction IMP + L-aspartate + GTP = N(6)-(1,2-dicarboxyethyl)-AMP + GDP + phosphate + 2 H(+). The protein operates within purine metabolism; AMP biosynthesis via de novo pathway; AMP from IMP: step 1/2. Functionally, plays an important role in the de novo pathway of purine nucleotide biosynthesis. Catalyzes the first committed step in the biosynthesis of AMP from IMP. The chain is Adenylosuccinate synthetase from Methylobacterium sp. (strain 4-46).